The sequence spans 100 residues: Small ribosomal subunit protein uS14c (100 aa).

It belongs to the universal ribosomal protein uS14 family. As to quaternary structure, part of the 30S ribosomal subunit.

It is found in the plastid. It localises to the chloroplast. Functionally, binds 16S rRNA, required for the assembly of 30S particles. This is Small ribosomal subunit protein uS14c from Psilotum nudum (Whisk fern).